We begin with the raw amino-acid sequence, 199 residues long: Putative lectin L633 (199 aa).

The first 25 residues, 1–25, serve as a signal peptide directing secretion; that stretch reads MNILLLLMLLTSIILLVILIFLAYN. Over residues 35-48 the composition is skewed to polar residues; the sequence is CITPAPESQSISPD. The interval 35-74 is disordered; that stretch reads CITPAPESQSISPDQTTQLQTTTPVTSTPSNPTPTTIIPN. Residues 49-73 are compositionally biased toward low complexity; it reads QTTQLQTTTPVTSTPSNPTPTTIIP. In terms of domain architecture, Bulb-type lectin spans 84-195; it reads EIVSNGDNVL…LGQELWCATR (112 aa). A glycan (N-linked (GlcNAc...) asparagine; by host) is linked at Asn-121.

It localises to the secreted. The polypeptide is Putative lectin L633 (Acanthamoeba polyphaga (Amoeba)).